Here is a 177-residue protein sequence, read N- to C-terminus: ATP synthase subunit delta (177 aa).

Belongs to the ATPase delta chain family. In terms of assembly, F-type ATPases have 2 components, F(1) - the catalytic core - and F(0) - the membrane proton channel. F(1) has five subunits: alpha(3), beta(3), gamma(1), delta(1), epsilon(1). F(0) has three main subunits: a(1), b(2) and c(10-14). The alpha and beta chains form an alternating ring which encloses part of the gamma chain. F(1) is attached to F(0) by a central stalk formed by the gamma and epsilon chains, while a peripheral stalk is formed by the delta and b chains.

It is found in the cell inner membrane. Its function is as follows. F(1)F(0) ATP synthase produces ATP from ADP in the presence of a proton or sodium gradient. F-type ATPases consist of two structural domains, F(1) containing the extramembraneous catalytic core and F(0) containing the membrane proton channel, linked together by a central stalk and a peripheral stalk. During catalysis, ATP synthesis in the catalytic domain of F(1) is coupled via a rotary mechanism of the central stalk subunits to proton translocation. Functionally, this protein is part of the stalk that links CF(0) to CF(1). It either transmits conformational changes from CF(0) to CF(1) or is implicated in proton conduction. This is ATP synthase subunit delta from Shewanella putrefaciens (strain CN-32 / ATCC BAA-453).